The primary structure comprises 456 residues: Argininosuccinate lyase (456 aa).

It belongs to the lyase 1 family. Argininosuccinate lyase subfamily.

It is found in the cytoplasm. The enzyme catalyses 2-(N(omega)-L-arginino)succinate = fumarate + L-arginine. It participates in amino-acid biosynthesis; L-arginine biosynthesis; L-arginine from L-ornithine and carbamoyl phosphate: step 3/3. The polypeptide is Argininosuccinate lyase (Shewanella pealeana (strain ATCC 700345 / ANG-SQ1)).